Consider the following 427-residue polypeptide: Peptidase B (427 aa).

Residues lysine 195 and aspartate 200 each contribute to the Mn(2+) site. Lysine 207 is a catalytic residue. Aspartate 218, aspartate 277, and glutamate 279 together coordinate Mn(2+). Arginine 281 is a catalytic residue.

It belongs to the peptidase M17 family. Homohexamer. Mn(2+) serves as cofactor.

Its subcellular location is the cytoplasm. It carries out the reaction Release of an N-terminal amino acid, Xaa, from a peptide or arylamide. Xaa is preferably Glu or Asp but may be other amino acids, including Leu, Met, His, Cys and Gln.. Functionally, probably plays an important role in intracellular peptide degradation. The sequence is that of Peptidase B from Escherichia coli O139:H28 (strain E24377A / ETEC).